The primary structure comprises 286 residues: Ribosomal RNA small subunit methyltransferase H (286 aa).

S-adenosyl-L-methionine-binding positions include 17–19 (AGH), Asp-36, Phe-63, Asp-84, and Gln-91.

The protein belongs to the methyltransferase superfamily. RsmH family.

It localises to the cytoplasm. The catalysed reaction is cytidine(1402) in 16S rRNA + S-adenosyl-L-methionine = N(4)-methylcytidine(1402) in 16S rRNA + S-adenosyl-L-homocysteine + H(+). Specifically methylates the N4 position of cytidine in position 1402 (C1402) of 16S rRNA. This is Ribosomal RNA small subunit methyltransferase H from Metamycoplasma arthritidis (strain 158L3-1) (Mycoplasma arthritidis).